Reading from the N-terminus, the 281-residue chain is DegV domain-containing protein (281 aa).

Residues W3–I280 enclose the DegV domain. The hexadecanoate site is built by S63 and S91.

May bind long-chain fatty acids, such as palmitate, and may play a role in lipid transport or fatty acid metabolism. The polypeptide is DegV domain-containing protein (Streptococcus gordonii).